A 235-amino-acid chain; its full sequence is MVNKNINDIPPILCCSNIIKRYQYSNFSITVLDGITMSIEYNKIIAIIGASGSGKSTLLHIMGGLDKPTSGDVFLEGRALNKLSDKDCSIMRNTSIGFIYQFHHLLPDFSVLENIAMPLLIKGLKFAIAKHKAQFILELIGLNNLCDRYPCELSGGESQRVAVARAIINNPPLVLADEPTGNLDESNSNNVFKLLEKINLWYGTTFVIATHDLSLAKKCHKIYIVSNGMLKISTI.

The ABC transporter domain occupies 13-235 (LCCSNIIKRY…SNGMLKISTI (223 aa)). 49-56 (GASGSGKS) contacts ATP.

Belongs to the ABC transporter superfamily. Lipoprotein translocase (TC 3.A.1.125) family. The complex is composed of two ATP-binding proteins (LolD) and two transmembrane proteins (LolC and LolE).

It is found in the cell inner membrane. Its function is as follows. Part of the ABC transporter complex LolCDE involved in the translocation of mature outer membrane-directed lipoproteins, from the inner membrane to the periplasmic chaperone, LolA. Responsible for the formation of the LolA-lipoprotein complex in an ATP-dependent manner. This Blochmanniella floridana protein is Lipoprotein-releasing system ATP-binding protein LolD.